A 215-amino-acid polypeptide reads, in one-letter code: Dual specificity phosphatase 29 (215 aa).

In terms of domain architecture, Tyrosine-protein phosphatase spans 53–201 (HVNEVWPRLH…LRELDKQLVK (149 aa)). A substrate-binding site is contributed by 145–152 (HCAMGRSR). Catalysis depends on Cys-146, which acts as the Phosphocysteine intermediate.

This sequence belongs to the protein-tyrosine phosphatase family. Non-receptor class dual specificity subfamily. As to quaternary structure, homodimer. Interacts with PRKAA2.

The protein resides in the cytoplasm. It localises to the nucleus. The catalysed reaction is O-phospho-L-tyrosyl-[protein] + H2O = L-tyrosyl-[protein] + phosphate. It carries out the reaction O-phospho-L-seryl-[protein] + H2O = L-seryl-[protein] + phosphate. The enzyme catalyses O-phospho-L-threonyl-[protein] + H2O = L-threonyl-[protein] + phosphate. Dual specificity phosphatase able to dephosphorylate phosphotyrosine, phosphoserine and phosphothreonine residues within the same substrate, with a preference for phosphotyrosine as a substrate. Involved in the modulation of intracellular signaling cascades. In skeletal muscle regulates systemic glucose homeostasis by activating, AMPK, an energy sensor protein kinase. Affects MAP kinase signaling though modulation of the MAPK1/2 cascade in skeletal muscle promoting muscle cell differentiation, development and atrophy. The chain is Dual specificity phosphatase 29 (Dusp29) from Rattus norvegicus (Rat).